Consider the following 362-residue polypeptide: Spermidine/putrescine import ATP-binding protein PotA (362 aa).

The ABC transporter domain maps to 4–235 (IKLDHITKQY…PVNDFVARFI (232 aa)). 37–44 (GPSGSGKT) contacts ATP.

This sequence belongs to the ABC transporter superfamily. Spermidine/putrescine importer (TC 3.A.1.11.1) family. The complex is composed of two ATP-binding proteins (PotA), two transmembrane proteins (PotB and PotC) and a solute-binding protein (PotD).

It localises to the cell membrane. It carries out the reaction ATP + H2O + polyamine-[polyamine-binding protein]Side 1 = ADP + phosphate + polyamineSide 2 + [polyamine-binding protein]Side 1.. Its function is as follows. Part of the ABC transporter complex PotABCD involved in spermidine/putrescine import. Responsible for energy coupling to the transport system. The chain is Spermidine/putrescine import ATP-binding protein PotA from Lactobacillus delbrueckii subsp. bulgaricus (strain ATCC BAA-365 / Lb-18).